The following is a 62-amino-acid chain: Short neurotoxin C (62 aa).

A compositionally biased stretch (polar residues) spans 1–16; that stretch reads RRCFNQQSSQPQTNKS. Residues 1 to 22 are disordered; it reads RRCFNQQSSQPQTNKSCPPGEN. Disulfide bonds link C3–C24, C17–C41, C43–C54, and C55–C60.

It belongs to the three-finger toxin family. Short-chain subfamily. Type I alpha-neurotoxin sub-subfamily. In terms of tissue distribution, expressed by the venom gland.

It is found in the secreted. In terms of biological role, binds to muscle nicotinic acetylcholine receptor (nAChR) and inhibit acetylcholine from binding to the receptor, thereby impairing neuromuscular transmission. This is Short neurotoxin C from Laticauda laticaudata (Blue-ringed sea krait).